The chain runs to 350 residues: Eukaryotic translation initiation factor 3 subunit I (350 aa).

WD repeat units lie at residues 8–49 (GHER…GTLE), 51–89 (HQGVIWSIDVDPDTHLCATGGGDLAIKLWKVETGKCVFT), 91–135 (ESPS…ESLT), 149–188 (QDGAKATVAGWSANGEFIISGHDDGYIYKYDAQTGEAVNS), 198–240 (EKNV…KVYK), and 296–335 (GHFGPLNTVAVHPDGTGYSSGGEDGFIRVHTFDKSYFDFY).

Belongs to the eIF-3 subunit I family. As to quaternary structure, component of the eukaryotic translation initiation factor 3 (eIF-3) complex.

It localises to the cytoplasm. Component of the eukaryotic translation initiation factor 3 (eIF-3) complex, which is involved in protein synthesis of a specialized repertoire of mRNAs and, together with other initiation factors, stimulates binding of mRNA and methionyl-tRNAi to the 40S ribosome. The eIF-3 complex specifically targets and initiates translation of a subset of mRNAs involved in cell proliferation. The chain is Eukaryotic translation initiation factor 3 subunit I from Scheffersomyces stipitis (strain ATCC 58785 / CBS 6054 / NBRC 10063 / NRRL Y-11545) (Yeast).